Reading from the N-terminus, the 485-residue chain is Glycogen synthase (485 aa).

Position 15 (Lys15) interacts with ADP-alpha-D-glucose.

This sequence belongs to the glycosyltransferase 1 family. Bacterial/plant glycogen synthase subfamily.

The catalysed reaction is [(1-&gt;4)-alpha-D-glucosyl](n) + ADP-alpha-D-glucose = [(1-&gt;4)-alpha-D-glucosyl](n+1) + ADP + H(+). It participates in glycan biosynthesis; glycogen biosynthesis. Its function is as follows. Synthesizes alpha-1,4-glucan chains using ADP-glucose. The protein is Glycogen synthase of Geobacillus thermodenitrificans (strain NG80-2).